A 446-amino-acid polypeptide reads, in one-letter code: Pre-rRNA-processing protein crb3/ipi3 (446 aa).

WD repeat units follow at residues 74-113, 116-155, 172-214, 216-257, and 294-333; these read ILPE…LIYF, AHYQ…DQNS, GHKR…LLTT, ALPS…SNNV, and SCQS…VLRR.

It belongs to the WD repeat IPI3/WDR18 family. In terms of assembly, component of the RIX1 complex, composed of ipi1, rix1/ipi2 and crb3/ipi3 in a 1:2:2 stoichiometry. The complex interacts (via rix1) with mdn1 (via its hexameric AAA ATPase ring) and the pre-60S ribosome particles. Interacts with rix1, gcr3 and Las1.

The protein resides in the nucleus. It is found in the chromosome. Its function is as follows. Required for both pre-rRNA processing and heterochromatic gene silencing. Component of the RIX1 complex required for processing of ITS2 sequences from 35S pre-rRNA. This Schizosaccharomyces pombe (strain 972 / ATCC 24843) (Fission yeast) protein is Pre-rRNA-processing protein crb3/ipi3 (crb3).